Here is a 444-residue protein sequence, read N- to C-terminus: MFS-type transporter dbaD (444 aa).

Over residues 1 to 13 (MTEQPPQNHSVDL) the composition is skewed to polar residues. The tract at residues 1–57 (MTEQPPQNHSVDLNQNEDNNENDYRSSSATDAERPCEPKIEESTAKPPTGPPAPPPP) is disordered. Asn-8 carries an N-linked (GlcNAc...) asparagine glycan. The segment covering 31–44 (DAERPCEPKIEEST) has biased composition (basic and acidic residues). Over residues 48 to 57 (PTGPPAPPPP) the composition is skewed to pro residues. 11 helical membrane passes run 62 to 82 (LVAW…WGIM), 107 to 127 (WIGS…GSIY), 134 to 154 (ALLV…SLCK), 159 to 179 (VLLA…VPCV), 192 to 212 (TALG…PIVL), 223 to 243 (WSVR…IAVM), 267 to 287 (MAFT…LFYI), 301 to 323 (MAFY…PNAM), 330 to 350 (FNLI…LLAV), 356 to 376 (LIVI…LPPL), and 394 to 414 (MGFG…GAIL). Asn-421 carries an N-linked (GlcNAc...) asparagine glycan. Residues 424 to 444 (GLWVYGGVTSLVAGFIICIAV) traverse the membrane as a helical segment.

This sequence belongs to the major facilitator superfamily. Monocarboxylate porter (TC 2.A.1.13) family.

It is found in the cell membrane. Its function is as follows. MFS-type transporter; part of the gene cluster that mediates the biosynthesis of the antibiotic 2,4- dihydroxy-3-methyl-6-(2-oxopropyl)benzaldehyde (DHMBA) and its derivatives. Is probably involved in the transport of the metabolites to the environment. The chain is MFS-type transporter dbaD from Emericella nidulans (strain FGSC A4 / ATCC 38163 / CBS 112.46 / NRRL 194 / M139) (Aspergillus nidulans).